The following is a 193-amino-acid chain: MLNISKKNIIFFILFFLIISLILFNWKYFSLVNKENLESLKYEKIIKKINKKKSKNLYEVENFIVQNTSIYGTLTALSLAKKYVECNNLDKALLQLNNSLKYTKEENLKNLLKINIAKIQIQKNENNKAMNILETIQNHNWKNIIEHMKGDIFININNKKEAIKSWKKSLFIEDSNASKEIINMKLNELKEQN.

Over 1–8 (MLNISKKN) the chain is Cytoplasmic. The helical transmembrane segment at 9-29 (IIFFILFFLIISLILFNWKYF) threads the bilayer. Residues 30–193 (SLVNKENLES…MKLNELKEQN (164 aa)) lie on the Periplasmic side of the membrane.

The protein belongs to the YfgM family. In terms of assembly, interacts with the SecYEG translocon. Forms a complex with PpiD.

The protein resides in the cell inner membrane. In terms of biological role, may mediate protein transfer from the SecYEG translocon to the periplasmic chaperone network via its periplasmic C-terminal region. The protein is Ancillary SecYEG translocon subunit of Buchnera aphidicola subsp. Acyrthosiphon pisum (strain APS) (Acyrthosiphon pisum symbiotic bacterium).